Here is a 204-residue protein sequence, read N- to C-terminus: Large ribosomal subunit protein bL25 (204 aa).

The disordered stretch occupies residues 1–23 (MSETLHLSAETRDRAGKGASRAL).

The protein belongs to the bacterial ribosomal protein bL25 family. CTC subfamily. Part of the 50S ribosomal subunit; part of the 5S rRNA/L5/L18/L25 subcomplex. Contacts the 5S rRNA. Binds to the 5S rRNA independently of L5 and L18.

This is one of the proteins that binds to the 5S RNA in the ribosome where it forms part of the central protuberance. In Novosphingobium aromaticivorans (strain ATCC 700278 / DSM 12444 / CCUG 56034 / CIP 105152 / NBRC 16084 / F199), this protein is Large ribosomal subunit protein bL25.